A 77-amino-acid chain; its full sequence is Small ribosomal subunit protein uS17 (77 aa).

Belongs to the universal ribosomal protein uS17 family. In terms of assembly, part of the 30S ribosomal subunit.

One of the primary rRNA binding proteins, it binds specifically to the 5'-end of 16S ribosomal RNA. This Anaplasma marginale (strain St. Maries) protein is Small ribosomal subunit protein uS17.